The chain runs to 101 residues: Small ribosomal subunit protein uS14 (101 aa).

The segment at 51-70 (LPRDSSPSRQRNRCSQTGRP) is disordered. Over residues 52–68 (PRDSSPSRQRNRCSQTG) the composition is skewed to polar residues.

Belongs to the universal ribosomal protein uS14 family. As to quaternary structure, part of the 30S ribosomal subunit. Contacts proteins S3 and S10.

Functionally, binds 16S rRNA, required for the assembly of 30S particles and may also be responsible for determining the conformation of the 16S rRNA at the A site. The protein is Small ribosomal subunit protein uS14 of Mannheimia succiniciproducens (strain KCTC 0769BP / MBEL55E).